We begin with the raw amino-acid sequence, 88 residues long: EMBRYO SURROUNDING FACTOR 1-like protein 7 (88 aa).

Positions 1–22 (MKSSHIALICIVMFSLFALHES) are cleaved as a signal peptide. Cystine bridges form between Cys41-Cys57, Cys46-Cys85, Cys55-Cys81, and Cys58-Cys68.

This sequence belongs to the MEG family. As to expression, expressed in leaves and flowers.

This Arabidopsis thaliana (Mouse-ear cress) protein is EMBRYO SURROUNDING FACTOR 1-like protein 7 (ESFL7).